Reading from the N-terminus, the 259-residue chain is Thiazole synthase (259 aa).

Lys-98 acts as the Schiff-base intermediate with DXP in catalysis. 1-deoxy-D-xylulose 5-phosphate contacts are provided by residues Gly-159, 185-186 (AG), and 207-208 (NS).

This sequence belongs to the ThiG family. As to quaternary structure, homotetramer. Forms heterodimers with either ThiH or ThiS.

Its subcellular location is the cytoplasm. The catalysed reaction is [ThiS sulfur-carrier protein]-C-terminal-Gly-aminoethanethioate + 2-iminoacetate + 1-deoxy-D-xylulose 5-phosphate = [ThiS sulfur-carrier protein]-C-terminal Gly-Gly + 2-[(2R,5Z)-2-carboxy-4-methylthiazol-5(2H)-ylidene]ethyl phosphate + 2 H2O + H(+). Its pathway is cofactor biosynthesis; thiamine diphosphate biosynthesis. Its function is as follows. Catalyzes the rearrangement of 1-deoxy-D-xylulose 5-phosphate (DXP) to produce the thiazole phosphate moiety of thiamine. Sulfur is provided by the thiocarboxylate moiety of the carrier protein ThiS. In vitro, sulfur can be provided by H(2)S. The protein is Thiazole synthase of Chlorobaculum tepidum (strain ATCC 49652 / DSM 12025 / NBRC 103806 / TLS) (Chlorobium tepidum).